Consider the following 555-residue polypeptide: Carboxysome assembly protein CcmM (555 aa).

The interval 1–209 is has carbonic anhydrase (CA) activity; the sequence is MAVRSTAAPP…CIAPLRNDQV (209 aa). The active-site Proton donor/acceptor is Glu56. His75, His102, and His107 together coordinate Zn(2+). A disulfide bridge links Cys194 with Cys200. Residues 223–315 are rbcS-like repeat 1, SSUL1; it reads SSEVASNSLG…RVLETIIQRP (93 aa). Disordered stretches follow at residues 323-351 and 441-464; these read TSFKAPASNTNGNGSYHSNGNGNGYSNGA and NGQVAPSSSPRTVVSASSASSGTA. 2 stretches are compositionally biased toward low complexity: residues 330 to 351 and 445 to 464; these read SNTNGNGSYHSNGNGNGYSNGA and APSSSPRTVVSASSASSGTA. Residues 347 to 440 form a rbcS-like repeat 2, SSUL2 region; sequence YSNGATSGKV…RVLESIIQRP (94 aa). Positions 460–555 are rbcS-like repeat 3, SSUL3; that stretch reads SSGTATATAT…RVLETIIQRP (96 aa).

It belongs to the gamma-class carbonic anhydrase family. Probable homotrimer; zinc is bound between adjacent monomers. Full length protein (M58) interacts with CcmN. The C-terminal RbcS-like domains (SSUL) bind to holo-RuBisCO, as does the M35 short form. Zn(2+) serves as cofactor. Post-translationally, the first amino acid of the short form (equivalent to Val-226) is not seen in Edman degradation, while Ser-230 may be post-translationally modified. Migrates in gels as 2 about equal forms of about 60 and 35 kDa (called M58 and M35). They are probably the result of alternative translation initiation.

The protein resides in the carboxysome. It localises to the cytoplasm. The catalysed reaction is hydrogencarbonate + H(+) = CO2 + H2O. Carbonic anhydrase (CA) activity is probably under redox control to remain inactive in the cytoplasm. Carbonic anhydrase (CA) activity of full-length protein and N-terminal fragment is inhibited by ethoxyzolamide. N-terminal fragment CA activity is activated under oxidizing conditions and inhibited under reducing conditions. Its function is as follows. Functions as a scaffold protein for the assembly of beta-carboxysomes, initiates carboxysome assembly by coalescing RuBisCO (ribulose bisphosphate carboxylase, rbcL-rbcS). Produced as a full-length (M58) and a short form (M35), possibly by alternative translation initiation; probably both forms are required for correct carboxysome assembly and growth. In this strain both forms are equally abundant. A moderately active carbonic anhydrase that catalyzes the reversible hydration of carbon dioxide. Essential to photosynthetic carbon dioxide fixation, supplies CO(2) to ribulose bisphosphate carboxylase (RuBisCO) in the carboxysome. Also hydrolyzes COS. In terms of biological role, beta-carboxysome assembly initiates when soluble RuBisCO is condensed into a liquid matrix in a pre-carboxysome by the RbcS-like domains of probably both forms of CcmM. CcmN interacts with the N-terminus of full length CcmM, and then recruits the shell proteins (CcmK) via CcmN's encapsulation peptide. Shell formation requires both CcmK proteins and CcmO. CcmL caps the otherwise elongated carboxysome. Once fully encapsulated carboxysomes are formed, they migrate within the cell probably via interactions with the cytoskeleton. This chain is Carboxysome assembly protein CcmM, found in Nostoc sp. (strain PCC 7120 / SAG 25.82 / UTEX 2576).